The primary structure comprises 166 residues: NAD(P)H-quinone oxidoreductase subunit I, chloroplastic (166 aa).

4Fe-4S ferredoxin-type domains lie at 55–84 (GRIH…VDWK) and 95–124 (LNYS…MTEE). Residues Cys64, Cys67, Cys70, Cys74, Cys104, Cys107, Cys110, and Cys114 each coordinate [4Fe-4S] cluster.

Belongs to the complex I 23 kDa subunit family. In terms of assembly, NDH is composed of at least 16 different subunits, 5 of which are encoded in the nucleus. [4Fe-4S] cluster is required as a cofactor.

It localises to the plastid. It is found in the chloroplast thylakoid membrane. It catalyses the reaction a plastoquinone + NADH + (n+1) H(+)(in) = a plastoquinol + NAD(+) + n H(+)(out). It carries out the reaction a plastoquinone + NADPH + (n+1) H(+)(in) = a plastoquinol + NADP(+) + n H(+)(out). Its function is as follows. NDH shuttles electrons from NAD(P)H:plastoquinone, via FMN and iron-sulfur (Fe-S) centers, to quinones in the photosynthetic chain and possibly in a chloroplast respiratory chain. The immediate electron acceptor for the enzyme in this species is believed to be plastoquinone. Couples the redox reaction to proton translocation, and thus conserves the redox energy in a proton gradient. This Chamaechaenactis scaposa (Fullstem) protein is NAD(P)H-quinone oxidoreductase subunit I, chloroplastic.